The chain runs to 167 residues: SsrA-binding protein (167 aa).

The segment at 139-167 (QAHDKRHAEKEREWQRDKQRIMRAHNRNA) is disordered. Basic and acidic residues predominate over residues 144–158 (RHAEKEREWQRDKQR).

This sequence belongs to the SmpB family.

The protein localises to the cytoplasm. In terms of biological role, required for rescue of stalled ribosomes mediated by trans-translation. Binds to transfer-messenger RNA (tmRNA), required for stable association of tmRNA with ribosomes. tmRNA and SmpB together mimic tRNA shape, replacing the anticodon stem-loop with SmpB. tmRNA is encoded by the ssrA gene; the 2 termini fold to resemble tRNA(Ala) and it encodes a 'tag peptide', a short internal open reading frame. During trans-translation Ala-aminoacylated tmRNA acts like a tRNA, entering the A-site of stalled ribosomes, displacing the stalled mRNA. The ribosome then switches to translate the ORF on the tmRNA; the nascent peptide is terminated with the 'tag peptide' encoded by the tmRNA and targeted for degradation. The ribosome is freed to recommence translation, which seems to be the essential function of trans-translation. This chain is SsrA-binding protein, found in Xylella fastidiosa (strain 9a5c).